The following is a 690-amino-acid chain: SWI/SNF-related matrix-associated actin-dependent regulator of chromatin subfamily A-like protein 1 homolog (690 aa).

The tract at residues 30–49 is disordered; sequence MQAAANATASTSSAAPPAPP. The segment covering 31–44 has biased composition (low complexity); sequence QAAANATASTSSAA. The HARP domain maps to 92 to 170; it reads PTSLIKPTIG…AVKVELEPLP (79 aa). The region spanning 209–367 is the Helicase ATP-binding domain; sequence IFALERDGRI…FTQIRLIDHK (159 aa). ATP is bound at residue 222–229; the sequence is DEMGLGKS. A DESH box motif is present at residues 316-319; it reads DESH. The short motif at 411–428 is the Nuclear localization signal element; sequence RRLKADVLKDLPEKRREV. Residues 482 to 639 enclose the Helicase C-terminal domain; sequence ILENYFYPDA…TFRTADKMHL (158 aa).

The protein belongs to the SNF2/RAD54 helicase family. SMARCAL1 subfamily.

It localises to the nucleus. The enzyme catalyses ATP + H2O = ADP + phosphate + H(+). In terms of biological role, ATP-dependent annealing helicase that catalyzes the rewinding of the stably unwound DNA. This is SWI/SNF-related matrix-associated actin-dependent regulator of chromatin subfamily A-like protein 1 homolog from Caenorhabditis elegans.